The following is a 221-amino-acid chain: Protein-L-isoaspartate O-methyltransferase (221 aa).

Ser-70 is a catalytic residue.

The protein belongs to the methyltransferase superfamily. L-isoaspartyl/D-aspartyl protein methyltransferase family.

The protein resides in the cytoplasm. It carries out the reaction [protein]-L-isoaspartate + S-adenosyl-L-methionine = [protein]-L-isoaspartate alpha-methyl ester + S-adenosyl-L-homocysteine. Catalyzes the methyl esterification of L-isoaspartyl residues in peptides and proteins that result from spontaneous decomposition of normal L-aspartyl and L-asparaginyl residues. It plays a role in the repair and/or degradation of damaged proteins. In Alkalilimnicola ehrlichii (strain ATCC BAA-1101 / DSM 17681 / MLHE-1), this protein is Protein-L-isoaspartate O-methyltransferase.